We begin with the raw amino-acid sequence, 44 residues long: Photosystem I reaction center subunit IX (44 aa).

Residues 9-29 (FMRSAPIVAAIWISLTAGIII) traverse the membrane as a helical segment.

This sequence belongs to the PsaJ family.

Its subcellular location is the cellular thylakoid membrane. Functionally, may help in the organization of the PsaE and PsaF subunits. The sequence is that of Photosystem I reaction center subunit IX from Prochlorococcus marinus (strain MIT 9515).